Reading from the N-terminus, the 313-residue chain is tRNA dimethylallyltransferase (313 aa).

Residue 11–18 (GPTACGKT) coordinates ATP. Residue 13–18 (TACGKT) coordinates substrate. Interaction with substrate tRNA regions lie at residues 36–39 (DSAL), 160–164 (QRIER), and 243–248 (RCVGYR).

The protein belongs to the IPP transferase family. In terms of assembly, monomer. Mg(2+) is required as a cofactor.

It catalyses the reaction adenosine(37) in tRNA + dimethylallyl diphosphate = N(6)-dimethylallyladenosine(37) in tRNA + diphosphate. In terms of biological role, catalyzes the transfer of a dimethylallyl group onto the adenine at position 37 in tRNAs that read codons beginning with uridine, leading to the formation of N6-(dimethylallyl)adenosine (i(6)A). This chain is tRNA dimethylallyltransferase, found in Neisseria meningitidis serogroup C (strain 053442).